A 520-amino-acid chain; its full sequence is Maturase K (520 aa).

The protein belongs to the intron maturase 2 family. MatK subfamily.

The protein localises to the plastid. Its subcellular location is the chloroplast. Its function is as follows. Usually encoded in the trnK tRNA gene intron. Probably assists in splicing its own and other chloroplast group II introns. This Liriope muscari (Big blue lilyturf) protein is Maturase K.